Consider the following 283-residue polypeptide: Lysozyme-like protein 7 (283 aa).

Residues Met1–Ser18 form the signal peptide. Residues Tyr53–Ala273 form the Ch-type lysozyme domain.

Belongs to the glycosyl hydrolase 25 family. Expressed in intestine. Expressed in rectal gland cells and head neurons.

In terms of biological role, plays a role in resistance to Gram-positive bacteria B.thuringiensis and M.nematophilum and Gram-negative bacteria S.boydii or S.flexneri infection and to fungus C.neoformans infection. Plays a role in susceptibility to Gram-negative bacterium S.typhimurium infection. This chain is Lysozyme-like protein 7, found in Caenorhabditis elegans.